The primary structure comprises 398 residues: Phosphoglycerate kinase (398 aa).

Substrate contacts are provided by residues 21 to 23 (DFN), Arg36, 59 to 62 (HLGR), Arg119, and Arg157. Residues Lys208, Gly296, Glu327, and 354 to 357 (GGDS) each bind ATP.

The protein belongs to the phosphoglycerate kinase family. Monomer.

It localises to the cytoplasm. The catalysed reaction is (2R)-3-phosphoglycerate + ATP = (2R)-3-phospho-glyceroyl phosphate + ADP. It functions in the pathway carbohydrate degradation; glycolysis; pyruvate from D-glyceraldehyde 3-phosphate: step 2/5. This chain is Phosphoglycerate kinase, found in Streptococcus pyogenes serotype M3 (strain ATCC BAA-595 / MGAS315).